A 524-amino-acid chain; its full sequence is Lysophospholipid acyltransferase LPCAT4 (524 aa).

The next 2 membrane-spanning stretches (helical) occupy residues 40 to 62 (CLLG…FLLW) and 87 to 107 (TVCH…LGFL). The HXXXXD motif signature appears at 129 to 134 (HSTFFD). A glycan (N-linked (GlcNAc...) asparagine) is linked at N152. Residues 490–524 (PHKPRSTSQIPNASSPSSPTALANGTVQAPKQKGD) form a disordered region. Polar residues predominate over residues 495–518 (STSQIPNASSPSSPTALANGTVQA).

It belongs to the 1-acyl-sn-glycerol-3-phosphate acyltransferase family. In terms of tissue distribution, widely expressed with much higher level in brain. Expressed in erythroleukemic cells but not in reticulocytes.

It is found in the endoplasmic reticulum membrane. The catalysed reaction is a 1-acyl-sn-glycero-3-phosphoethanolamine + an acyl-CoA = a 1,2-diacyl-sn-glycero-3-phosphoethanolamine + CoA. It catalyses the reaction a 1-O-(1Z-alkenyl)-sn-glycero-3-phosphoethanolamine + an acyl-CoA = a 1-O-(1Z-alkenyl)-2-acyl-sn-glycero-3-phosphoethanolamine + CoA. It carries out the reaction a 1-acyl-sn-glycero-3-phosphocholine + an acyl-CoA = a 1,2-diacyl-sn-glycero-3-phosphocholine + CoA. The enzyme catalyses a 1-O-alkyl-sn-glycero-3-phosphocholine + acetyl-CoA = a 1-O-alkyl-2-acetyl-sn-glycero-3-phosphocholine + CoA. The catalysed reaction is a 1-acyl-sn-glycero-3-phospho-L-serine + an acyl-CoA = a 1,2-diacyl-sn-glycero-3-phospho-L-serine + CoA. It catalyses the reaction octanoyl-CoA + a 1-acyl-sn-glycero-3-phosphoethanolamine = 1-acyl-2-octanoyl-sn-glycero-3-phosphoethanolamine + CoA. It carries out the reaction a 1-acyl-sn-glycero-3-phosphoethanolamine + hexadecanoyl-CoA = 1-acyl-2-hexadecanoyl-sn-glycero-3-phosphoethanolamine + CoA. The enzyme catalyses a 1-acyl-sn-glycero-3-phosphoethanolamine + octadecanoyl-CoA = 1-acyl-2-octadecanoyl-sn-glycero-3-phosphoethanolamine + CoA. The catalysed reaction is a 1-acyl-sn-glycero-3-phosphoethanolamine + (9Z)-octadecenoyl-CoA = 1-acyl-2-(9Z)-octadecenoyl-sn-glycero-3-phosphoethanolamine + CoA. It catalyses the reaction a 1-acyl-sn-glycero-3-phosphoethanolamine + (5Z,8Z,11Z,14Z)-eicosatetraenoyl-CoA = 1-acyl-2-(5Z,8Z,11Z,14Z)-eicosatetraenoyl-sn-glycero-3-phosphoethanolamine + CoA. It carries out the reaction a 1-O-(1Z-alkenyl)-sn-glycero-3-phosphoethanolamine + octanoyl-CoA = 1-O-(1Z)-alkenyl-2-octanoyl-sn-glycero-3-phosphoethanolamine + CoA. The enzyme catalyses a 1-O-(1Z-alkenyl)-sn-glycero-3-phosphoethanolamine + hexadecanoyl-CoA = 1-O-(1Z)-alkenyl-2-hexadecanoyl-sn-glycero-3-phosphoethanolamine + CoA. The catalysed reaction is a 1-O-(1Z-alkenyl)-sn-glycero-3-phosphoethanolamine + octadecanoyl-CoA = 1-O-(1Z)-alkenyl-2-octadecanoyl-sn-glycero-3-phosphoethanolamine + CoA. It catalyses the reaction a 1-O-(1Z-alkenyl)-sn-glycero-3-phosphoethanolamine + (9Z)-octadecenoyl-CoA = 1-O-(1Z)-alkenyl-2-(9Z)-octadecenoyl-sn-glycero-3-phosphoethanolamine + CoA. It carries out the reaction a 1-O-(1Z-alkenyl)-sn-glycero-3-phosphoethanolamine + (5Z,8Z,11Z,14Z)-eicosatetraenoyl-CoA = 1-O-(1Z)-alkenyl-2-(5Z,8Z,11Z,14Z)-eicosatetraenoyl-sn-glycero-3-phosphoethanolamine + CoA. The enzyme catalyses a 1-acyl-sn-glycero-3-phosphocholine + hexadecanoyl-CoA = 1-acyl-2-hexadecanoyl-sn-glycero-3-phosphocholine + CoA. The catalysed reaction is a 1-acyl-sn-glycero-3-phosphocholine + (9Z)-octadecenoyl-CoA = a 1-acyl-2-(9Z)-octadecenoyl-sn-glycero-3-phosphocholine + CoA. It catalyses the reaction 1-O-hexadecyl-sn-glycero-3-phosphocholine + (9Z)-octadecenoyl-CoA = 1-O-hexadecyl-2-(9Z)-octadecenoyl-sn-glycero-3-phosphocholine + CoA. It carries out the reaction 1-O-hexadecyl-sn-glycero-3-phosphocholine + (5Z,8Z,11Z,14Z)-eicosatetraenoyl-CoA = 1-O-hexadecyl-2-(5Z,8Z,11Z,14Z)-eicosatetraenoyl-sn-glycero-3-phosphocholine + CoA. The enzyme catalyses 1-hexadecanoyl-sn-glycero-3-phospho-L-serine + (9Z)-octadecenoyl-CoA = 1-hexadecanoyl-2-(9Z-octadecenoyl)-sn-glycero-3-phospho-L-serine + CoA. The catalysed reaction is 1-octadecanoyl-sn-glycero-3-phospho-(1'-sn-glycerol) + (9Z)-octadecenoyl-CoA = 1-octadecanoyl-2-(9Z-octadecenoyl)-sn-glycero-3-phospho-(1'-sn-glycerol) + CoA. It catalyses the reaction 1-octadecanoyl-sn-glycero-3-phospho-(1'-sn-glycerol) + (5Z,8Z,11Z,14Z)-eicosatetraenoyl-CoA = 1-octadecanoyl-2-(5Z,8Z,11Z,14Z-eicosatetraenoyl)-sn-glycero-3-phospho-(1'-sn-glycerol) + CoA. It participates in lipid metabolism; phospholipid metabolism. In terms of biological role, displays acyl-CoA-dependent lysophospholipid acyltransferase activity with a subset of lysophospholipids as substrates; converts lysophosphatidylethanolamine to phosphatidylethanolamine, 1-alkenyl-lysophatidylethanolamine to 1-alkenyl-phosphatidylethanolamine, lysophosphatidylglycerol and alkyl-lysophosphatidylcholine to phosphatidylglycerol and alkyl-phosphatidylcholine, respectively. In contrast, has no lysophosphatidylinositol, glycerol-3-phosphate, diacylglycerol or lysophosphatidic acid acyltransferase activity. Prefers long chain acyl-CoAs (C16, C18) as acyl donors. Converts lysophosphatidylcholine to phosphatidycholine. The polypeptide is Lysophospholipid acyltransferase LPCAT4 (Lpcat4) (Mus musculus (Mouse)).